The chain runs to 292 residues: 4-hydroxy-tetrahydrodipicolinate synthase (292 aa).

Pyruvate is bound at residue T44. The active-site Proton donor/acceptor is Y132. K161 (schiff-base intermediate with substrate) is an active-site residue. I203 is a binding site for pyruvate.

This sequence belongs to the DapA family. Homotetramer; dimer of dimers.

The protein resides in the cytoplasm. It carries out the reaction L-aspartate 4-semialdehyde + pyruvate = (2S,4S)-4-hydroxy-2,3,4,5-tetrahydrodipicolinate + H2O + H(+). It participates in amino-acid biosynthesis; L-lysine biosynthesis via DAP pathway; (S)-tetrahydrodipicolinate from L-aspartate: step 3/4. Its function is as follows. Catalyzes the condensation of (S)-aspartate-beta-semialdehyde [(S)-ASA] and pyruvate to 4-hydroxy-tetrahydrodipicolinate (HTPA). In Fervidobacterium nodosum (strain ATCC 35602 / DSM 5306 / Rt17-B1), this protein is 4-hydroxy-tetrahydrodipicolinate synthase.